We begin with the raw amino-acid sequence, 465 residues long: Ribulose bisphosphate carboxylase large chain (465 aa).

N6,N6,N6-trimethyllysine is present on Lys4. 2 residues coordinate substrate: Asn113 and Thr163. The Proton acceptor role is filled by Lys165. Substrate is bound at residue Lys167. The Mg(2+) site is built by Lys191, Asp193, and Glu194. An N6-carboxylysine modification is found at Lys191. His284 functions as the Proton acceptor in the catalytic mechanism. 3 residues coordinate substrate: Arg285, His317, and Ser369.

Belongs to the RuBisCO large chain family. Type I subfamily. Heterohexadecamer of 8 large chains and 8 small chains; disulfide-linked. The disulfide link is formed within the large subunit homodimers. Mg(2+) serves as cofactor. Post-translationally, the disulfide bond which can form in the large chain dimeric partners within the hexadecamer appears to be associated with oxidative stress and protein turnover.

Its subcellular location is the plastid. It localises to the chloroplast. The catalysed reaction is 2 (2R)-3-phosphoglycerate + 2 H(+) = D-ribulose 1,5-bisphosphate + CO2 + H2O. It catalyses the reaction D-ribulose 1,5-bisphosphate + O2 = 2-phosphoglycolate + (2R)-3-phosphoglycerate + 2 H(+). In terms of biological role, ruBisCO catalyzes two reactions: the carboxylation of D-ribulose 1,5-bisphosphate, the primary event in carbon dioxide fixation, as well as the oxidative fragmentation of the pentose substrate in the photorespiration process. Both reactions occur simultaneously and in competition at the same active site. The sequence is that of Ribulose bisphosphate carboxylase large chain from Ailanthus altissima (Tree-of-heaven).